The sequence spans 65 residues: Large ribosomal subunit protein bL35 (65 aa).

Residues 1–26 are compositionally biased toward basic residues; it reads MPKIKTHRGAAKRFSKTGTGKIKRSH. Positions 1–41 are disordered; it reads MPKIKTHRGAAKRFSKTGTGKIKRSHAFTSHILTSKTRKNK.

Belongs to the bacterial ribosomal protein bL35 family.

This Geotalea daltonii (strain DSM 22248 / JCM 15807 / FRC-32) (Geobacter daltonii) protein is Large ribosomal subunit protein bL35.